The sequence spans 106 residues: Large ribosomal subunit protein eL42Q (106 aa).

The protein belongs to the eukaryotic ribosomal protein eL42 family.

The chain is Large ribosomal subunit protein eL42Q (RIM-C) from Candida maltosa (Yeast).